The following is a 207-amino-acid chain: dTDP-4-dehydrorhamnose 3-epimerase (207 aa).

Substrate contacts are provided by residues R23, D28, 47–49, and R59; that span reads QAN. Catalysis depends on H62, which acts as the Proton acceptor. K72 and H119 together coordinate substrate. The active-site Proton donor is Y132. Substrate-binding residues include E143 and R167.

The protein belongs to the dTDP-4-dehydrorhamnose 3,5-epimerase family.

It functions in the pathway antibiotic biosynthesis; novobiocin biosynthesis. DTDP-6-deoxy-D-xylo-4-hexulose 3-epimerase that acts together with NovU to catalyze the formation of dTDP-4-keto-6-deoxy-5-C-methyl-L-lyxo-hexose from dTDP-4-keto-6-deoxy-D-glucose in the novobiocin biosynthesis pathway, an aminocoumarin family antibiotic that targets bacterial DNA gyrases. The protein is dTDP-4-dehydrorhamnose 3-epimerase of Streptomyces niveus (Streptomyces spheroides).